A 785-amino-acid polypeptide reads, in one-letter code: Leucyl aminopeptidase (785 aa).

Substrate-binding positions include Glu106 and 238-242; that span reads GAMEN. Residue His273 participates in Zn(2+) binding. Residue Glu274 is the Proton acceptor of the active site. Zn(2+) is bound by residues His277 and Glu296.

It belongs to the peptidase M1 family. In terms of assembly, co-immunoprecipitates with the 60 kDa chaperonin. Zn(2+) serves as cofactor. Can be phosphorylated by cell extracts.

It is found in the cytoplasm. The catalysed reaction is Release of an N-terminal amino acid, Xaa-|-Yaa-, in which Xaa is preferably Leu, but may be other amino acids including Pro although not Arg or Lys, and Yaa may be Pro. Amino acid amides and methyl esters are also readily hydrolyzed, but rates on arylamides are exceedingly low.. Preferentially acts as a leucyl-aminopeptidase, although it also has activity against other substrates. This Saccharolobus solfataricus (strain ATCC 35092 / DSM 1617 / JCM 11322 / P2) (Sulfolobus solfataricus) protein is Leucyl aminopeptidase (ape2).